The primary structure comprises 298 residues: MANTTKTRTHLIGGFFGGLTSAVALQPLDLLKTRIQQHQSQSIWSIVKNSKGFSELWRGTLPSAIRTSLGSALYLSSLNLMRTAIAKSKTNYNDGASKSSLLPKLTTYENLISGALARGAVGYMTMPVTVIKVRYESTLYSYTSLSQAVKHIYQSERIPGFFRGFGPTLVRDAPYSGIYVLLYEKAKEVVPKLLPRKFIKFDKHGSYLTSTSTLVNSTSAILSACLATTITAPFDTIKTRMQLEPKRYTNVWFTFKSIIKNEGILKLFSGLSMRLTRKALSAGIAWGIYEELIKLNKF.

Solcar repeat units follow at residues 5–84 (TKTR…MRTA), 105–189 (LTTY…AKEV), and 211–295 (TSTL…LIKL). 6 helical membrane passes run 11-36 (LIGGFFGGLTSAVALQPLDLLKTRIQ), 59-85 (GTLPSAIRTSLGSALYLSSLNLMRTAI), 111-136 (LISGALARGAVGYMTMPVTVIKVRYE), 164-187 (GFGPTLVRDAPYSGIYVLLYEKAK), 215-241 (VNSTSAILSACLATTITAPFDTIKTRM), and 270-288 (GLSMRLTRKALSAGIAWGI).

The protein belongs to the mitochondrial carrier (TC 2.A.29) family. SLC25A38 subfamily.

The protein resides in the mitochondrion inner membrane. It catalyses the reaction glycine(in) = glycine(out). Functionally, mitochondrial glycine transporter that imports glycine into the mitochondrial matrix. Plays an important role in providing glycine for the first enzymatic step in heme biosynthesis, the condensation of glycine with succinyl-CoA to produce 5-aminolevulinate (ALA) in the mitochondrial matrix. The protein is Mitochondrial glycine transporter of Vanderwaltozyma polyspora (strain ATCC 22028 / DSM 70294 / BCRC 21397 / CBS 2163 / NBRC 10782 / NRRL Y-8283 / UCD 57-17) (Kluyveromyces polysporus).